Consider the following 68-residue polypeptide: Large ribosomal subunit protein uL29 (68 aa).

Belongs to the universal ribosomal protein uL29 family.

The sequence is that of Large ribosomal subunit protein uL29 from Limosilactobacillus fermentum (strain NBRC 3956 / LMG 18251) (Lactobacillus fermentum).